A 674-amino-acid polypeptide reads, in one-letter code: UvrABC system protein C (674 aa).

One can recognise a GIY-YIG domain in the interval Thr16 to Val95. The region spanning Lys207–Val242 is the UVR domain.

Belongs to the UvrC family. Interacts with UvrB in an incision complex.

Its subcellular location is the cytoplasm. Functionally, the UvrABC repair system catalyzes the recognition and processing of DNA lesions. UvrC both incises the 5' and 3' sides of the lesion. The N-terminal half is responsible for the 3' incision and the C-terminal half is responsible for the 5' incision. The sequence is that of UvrABC system protein C from Pseudarthrobacter chlorophenolicus (strain ATCC 700700 / DSM 12829 / CIP 107037 / JCM 12360 / KCTC 9906 / NCIMB 13794 / A6) (Arthrobacter chlorophenolicus).